The primary structure comprises 209 residues: Chaperone protein TorD (209 aa).

It belongs to the TorD/DmsD family. TorD subfamily.

It localises to the cytoplasm. Its function is as follows. Involved in the biogenesis of TorA. Acts on TorA before the insertion of the molybdenum cofactor and, as a result, probably favors a conformation of the apoenzyme that is competent for acquiring the cofactor. The protein is Chaperone protein TorD of Shewanella sp. (strain MR-4).